We begin with the raw amino-acid sequence, 397 residues long: Acetate kinase (397 aa).

Mg(2+) is bound at residue Asn8. Lys15 provides a ligand contact to ATP. Residue Arg92 participates in substrate binding. Asp149 acts as the Proton donor/acceptor in catalysis. ATP-binding positions include 209–213 (HLGNG), 283–285 (DFR), and 331–335 (GVGEN). Position 385 (Glu385) interacts with Mg(2+).

The protein belongs to the acetokinase family. As to quaternary structure, homodimer. The cofactor is Mg(2+). Mn(2+) serves as cofactor.

It is found in the cytoplasm. It catalyses the reaction acetate + ATP = acetyl phosphate + ADP. The protein operates within metabolic intermediate biosynthesis; acetyl-CoA biosynthesis; acetyl-CoA from acetate: step 1/2. Functionally, catalyzes the formation of acetyl phosphate from acetate and ATP. Can also catalyze the reverse reaction. This is Acetate kinase from Corynebacterium glutamicum (strain R).